A 278-amino-acid chain; its full sequence is 2,5-diketo-D-gluconic acid reductase A (278 aa).

Tyr-50 functions as the Proton donor in the catalytic mechanism. Substrate is bound at residue His-108. NADP(+) is bound at residue 188–242; the sequence is GPLGQGKYDLFGAEPVTAAAAAHGKTPAQAVLRWHLQKGFVVFPKSVRRERLEEN. Positions 259 to 278 are disordered; it reads DAMDPGDGSGRVSAHPDEVD.

The protein belongs to the aldo/keto reductase family. In terms of assembly, monomer.

The protein localises to the cytoplasm. It carries out the reaction 2-dehydro-L-idonate + NADP(+) = 2,5-didehydro-D-gluconate + NADPH + H(+). Its activity is regulated as follows. Inhibited by Zn(2+), Fe(3+), Cu(2+) and Ni(2+). Functionally, catalyzes the reduction of 2,5-diketo-D-gluconic acid (25DKG) to 2-keto-L-gulonic acid (2KLG). 5-keto-D-fructose and dihydroxyacetone can also serve as substrates. 25DKGR-A exhibits a greater selectivity for the substrate and higher thermal stability than 25DKGR-B. This chain is 2,5-diketo-D-gluconic acid reductase A (dkgA), found in Corynebacterium sp. (strain ATCC 31090).